The chain runs to 400 residues: MSSKLVLVLNCGSSSLKFAIIDATNGEEHISGLAECFHLPEARIKWKVDGGKQEAALGAGAAHSEALNFIVNTILAQKPALSAQLTAIGHRIVHGGEKFTSSVIVTEDVIQGIKDSIPFAPLHNPAHLIGIAEALKSFPNLADKNVAVFDTAFHQTMPEESYLYALPYSLYKDHGIRRYGAHGTSHFYVSQEAAKILNKPLGELNVITCHLGNGGSVTAVRNGKCVDTSMGLTPLEGLVMGTRSGDLDPAIIFHLHDAMGMSVDQINTLLTKESGLLGLTEVTSDCRYVEDNYATKADAKRAMDVFCHRLAKYIGSYTALMDGRLDAVVFTGGIGENAAMVRELTLDKLGLLGFEIDHERNMAARFGKSGTITKDSSRLALVIPTNEELVIAQDAARLTA.

N10 is a Mg(2+) binding site. K17 contacts ATP. Residue R91 participates in substrate binding. D150 serves as the catalytic Proton donor/acceptor. ATP-binding positions include 210–214 (HLGNG), 285–287 (DCR), and 333–337 (GIGEN). E387 is a Mg(2+) binding site.

It belongs to the acetokinase family. As to quaternary structure, homodimer. Mg(2+) is required as a cofactor. Requires Mn(2+) as cofactor.

Its subcellular location is the cytoplasm. It carries out the reaction acetate + ATP = acetyl phosphate + ADP. The protein operates within metabolic intermediate biosynthesis; acetyl-CoA biosynthesis; acetyl-CoA from acetate: step 1/2. Functionally, catalyzes the formation of acetyl phosphate from acetate and ATP. Can also catalyze the reverse reaction. This chain is Acetate kinase, found in Yersinia pseudotuberculosis serotype IB (strain PB1/+).